A 208-amino-acid polypeptide reads, in one-letter code: Methylthioribulose-1-phosphate dehydratase (208 aa).

The Zn(2+) site is built by histidine 101 and histidine 103.

It belongs to the aldolase class II family. MtnB subfamily. It depends on Zn(2+) as a cofactor.

The catalysed reaction is 5-(methylsulfanyl)-D-ribulose 1-phosphate = 5-methylsulfanyl-2,3-dioxopentyl phosphate + H2O. Its pathway is amino-acid biosynthesis; L-methionine biosynthesis via salvage pathway; L-methionine from S-methyl-5-thio-alpha-D-ribose 1-phosphate: step 2/6. Its function is as follows. Catalyzes the dehydration of methylthioribulose-1-phosphate (MTRu-1-P) into 2,3-diketo-5-methylthiopentyl-1-phosphate (DK-MTP-1-P). This chain is Methylthioribulose-1-phosphate dehydratase, found in Gluconobacter oxydans (strain 621H) (Gluconobacter suboxydans).